A 499-amino-acid polypeptide reads, in one-letter code: MSRYVGAIDQGTTSSRFIVFDKGGNIVSVAQKEHRQIYPKPGWVEHDPMEILSNTNEVIGAALARANLTASDLAAVGITNQRETTLLWDRKTGQPLCNALVWMDTRTDQLVQQFTRDGGQDRFRAKTGLPLATYFAGLKLRWILDNVEGAKAKAEAGDALFGTVDSWLTWNLTGGVNGGHHVTDVTNASRTMLIDLATCAWDDDMLNAFGIPRACLPKIVPSSAVYGEIRTAPLQGTKLAGMLGDQQAALVGQTCFAPGEAKNTYGTGSFLLMNTGTEPVQSKAGLLTTLAYQLGDEKPRYALEGAIAITGALVQWLRDNLKLFDVAPQIEPLARSVEDNGDVYIVPAFSGLYAPYWKDDARGVIAGLTRYATRAHLARAALESTAYQVRDVVEAMQEDSGIRLAALKTDGGMVANELLMQFQADILNAPVVRPKMTETTALGAAYAAGLAVGYWANLEDLRANWGVDKTWEPSMPAETREKYYRSWKKAVQRSFAWVD.

Thr12 lines the ADP pocket. ATP contacts are provided by Thr12, Thr13, and Ser14. A sn-glycerol 3-phosphate-binding site is contributed by Thr12. Arg16 contributes to the ADP binding site. Residues Arg82, Glu83, Tyr134, and Asp245 each coordinate sn-glycerol 3-phosphate. Residues Arg82, Glu83, Tyr134, Asp245, and Gln246 each contribute to the glycerol site. Positions 267 and 311 each coordinate ADP. The ATP site is built by Thr267, Gly311, Gln315, and Gly412. ADP contacts are provided by Gly412 and Asn416.

This sequence belongs to the FGGY kinase family.

The catalysed reaction is glycerol + ATP = sn-glycerol 3-phosphate + ADP + H(+). It functions in the pathway polyol metabolism; glycerol degradation via glycerol kinase pathway; sn-glycerol 3-phosphate from glycerol: step 1/1. Inhibited by fructose 1,6-bisphosphate (FBP). In terms of biological role, key enzyme in the regulation of glycerol uptake and metabolism. Catalyzes the phosphorylation of glycerol to yield sn-glycerol 3-phosphate. The polypeptide is Glycerol kinase (Acidiphilium cryptum (strain JF-5)).